Reading from the N-terminus, the 340-residue chain is Uroporphyrinogen decarboxylase (340 aa).

Residues 21–25, Phe-40, Asp-71, Tyr-147, Ser-202, and His-316 each bind substrate; that span reads RQAGR.

Belongs to the uroporphyrinogen decarboxylase family. Homodimer.

It is found in the cytoplasm. The enzyme catalyses uroporphyrinogen III + 4 H(+) = coproporphyrinogen III + 4 CO2. It participates in porphyrin-containing compound metabolism; protoporphyrin-IX biosynthesis; coproporphyrinogen-III from 5-aminolevulinate: step 4/4. In terms of biological role, catalyzes the decarboxylation of four acetate groups of uroporphyrinogen-III to yield coproporphyrinogen-III. The chain is Uroporphyrinogen decarboxylase from Wolinella succinogenes (strain ATCC 29543 / DSM 1740 / CCUG 13145 / JCM 31913 / LMG 7466 / NCTC 11488 / FDC 602W) (Vibrio succinogenes).